The chain runs to 37 residues: Cytochrome b6-f complex subunit 5 (37 aa).

Residues 5 to 25 form a helical membrane-spanning segment; sequence LLFGIVLGLIPITLAGLFVTA.

It belongs to the PetG family. In terms of assembly, the 4 large subunits of the cytochrome b6-f complex are cytochrome b6, subunit IV (17 kDa polypeptide, PetD), cytochrome f and the Rieske protein, while the 4 small subunits are PetG, PetL, PetM and PetN. The complex functions as a dimer.

It is found in the plastid. The protein localises to the chloroplast thylakoid membrane. Its function is as follows. Component of the cytochrome b6-f complex, which mediates electron transfer between photosystem II (PSII) and photosystem I (PSI), cyclic electron flow around PSI, and state transitions. PetG is required for either the stability or assembly of the cytochrome b6-f complex. The polypeptide is Cytochrome b6-f complex subunit 5 (Lemna minor (Common duckweed)).